An 805-amino-acid chain; its full sequence is Phenylalanine--tRNA ligase beta subunit (805 aa).

In terms of domain architecture, tRNA-binding spans F40–S162. Residues A412–E486 form the B5 domain. 4 residues coordinate Mg(2+): D464, D470, E473, and E474.

It belongs to the phenylalanyl-tRNA synthetase beta subunit family. Type 1 subfamily. As to quaternary structure, tetramer of two alpha and two beta subunits. It depends on Mg(2+) as a cofactor.

It localises to the cytoplasm. It catalyses the reaction tRNA(Phe) + L-phenylalanine + ATP = L-phenylalanyl-tRNA(Phe) + AMP + diphosphate + H(+). This chain is Phenylalanine--tRNA ligase beta subunit (pheT), found in Mycoplasma pneumoniae (strain ATCC 29342 / M129 / Subtype 1) (Mycoplasmoides pneumoniae).